Consider the following 130-residue polypeptide: Protein ApaG (130 aa).

The region spanning 3 to 127 (SAVTRGIEVT…FSLDVPEQRR (125 aa)) is the ApaG domain.

The chain is Protein ApaG from Brucella suis biovar 1 (strain 1330).